Reading from the N-terminus, the 468-residue chain is Adenosylhomocysteinase (468 aa).

Substrate-binding residues include Thr57, Asp132, and Glu194. Thr195–Thr197 is a binding site for NAD(+). Positions 224 and 228 each coordinate substrate. Residues Asn229, Gly258–Gly263, Glu281, Asn316, Ile337–His339, and Asn382 contribute to the NAD(+) site.

This sequence belongs to the adenosylhomocysteinase family. It depends on NAD(+) as a cofactor.

It is found in the cytoplasm. The enzyme catalyses S-adenosyl-L-homocysteine + H2O = L-homocysteine + adenosine. It functions in the pathway amino-acid biosynthesis; L-homocysteine biosynthesis; L-homocysteine from S-adenosyl-L-homocysteine: step 1/1. In terms of biological role, may play a key role in the regulation of the intracellular concentration of adenosylhomocysteine. The polypeptide is Adenosylhomocysteinase (Methylobacterium sp. (strain 4-46)).